A 288-amino-acid polypeptide reads, in one-letter code: Nucleotide-binding protein Mlg_2233 (288 aa).

An ATP-binding site is contributed by 11–18 (GLSGSGKS). Residue 63-66 (DARN) participates in GTP binding.

Belongs to the RapZ-like family.

In terms of biological role, displays ATPase and GTPase activities. This Alkalilimnicola ehrlichii (strain ATCC BAA-1101 / DSM 17681 / MLHE-1) protein is Nucleotide-binding protein Mlg_2233.